Reading from the N-terminus, the 139-residue chain is Protein FAM237B (139 aa).

The first 24 residues, 1–24, serve as a signal peptide directing secretion; the sequence is MCFATRRWFYLHLGCMMLINLVNA. M112 bears the Methionine amide mark. The propeptide at 113–139 is removed in the mature form; that stretch reads GRRQVMPPKYNFPQKITGGNLNVYLRE.

In terms of processing, the active form requires C-terminal amidation and disulfide bond formation.

Its subcellular location is the secreted. May be capable of activating GPR83 via the GNAQ signaling pathway. The protein is Protein FAM237B of Homo sapiens (Human).